A 599-amino-acid chain; its full sequence is Growth factor receptor-bound protein 10 (599 aa).

Positions 1 to 23 (MNNDINSSVESLNSACNMQSDTD) are enriched in polar residues. Residues 1–122 (MNNDINSSVE…QPPAKHFPPG (122 aa)) are disordered. Residues 32–43 (QSASNQPSASSS) show a composition bias toward low complexity. Positions 44-61 (RGQPQASPRQKMQRSQPV) are enriched in polar residues. Serine 50 is subject to Phosphoserine. Positions 97-118 (GSPPSVAPSSLPPPPSQPPAKH) are enriched in pro residues. Phosphoserine; by MTOR, MAPK1 and MAPK3 is present on serine 98. The 85-residue stretch at 171 to 255 (LRKDVKVFSE…SKFLFRKNYA (85 aa)) folds into the Ras-associating domain. A PH domain is found at 295–404 (CPEIQGFLQV…WMTAFRLLKY (110 aa)). A Phosphoserine; by MTOR and PKB/AKT1 modification is found at serine 433. A Phosphoserine modification is found at serine 436. Position 481 is a phosphoserine; by MTOR, MAPK1 and MAPK3 (serine 481). The SH2 domain maps to 498-594 (WFHGRISREE…VLPCKLKHHC (97 aa)).

Belongs to the GRB7/10/14 family. Interacts with ligand-activated tyrosine kinase receptors, including FGFR1, INSR, IGF1R, MET and PDGFRB in a phosphotyrosine-dependent manner through the SH2 domain. Poorly binds to the EGFR. Directly interacts with MAP3K14/NIK and is recruited to the EGFR-ERBB2 complex. Interacts with GIGYF1/PERQ1 and GIGYF2/TNRC15. When unphosphorylated, interacts with AKT1 and when phosphorylated with YWHAE/14-3-3 epsilon. Interacts with NEDD4. Interacts with LRP6, thus interfering with the binding of AXIN1 to LRP6. Binds relatively non-specifically to several phosphoinositides, including PI(5)P, PI(4,5)P2, PI(3,4)P2 and PI(3,4,5)P3, with modest affinities through the PH domain. Binds to activated NRAS. Phosphorylated on serine residues upon EGF, FGF and PDGF stimulation.

The protein localises to the cytoplasm. Its activity is regulated as follows. Phosphorylation by mTORC1 stabilizes and activates GRB10 constituting a feedback pathway by which mTORC1 inhibits INSR-dependent signaling. In terms of biological role, adapter protein which modulates coupling of a number of cell surface receptor kinases with specific signaling pathways. Binds to, and suppress signals from, activated receptors tyrosine kinases, including the insulin (INSR) and insulin-like growth factor (IGF1R) receptors. The inhibitory effect can be achieved by 2 mechanisms: interference with the signaling pathway and increased receptor degradation. Delays and reduces AKT1 phosphorylation in response to insulin stimulation. Blocks association between INSR and IRS1 and IRS2 and prevents insulin-stimulated IRS1 and IRS2 tyrosine phosphorylation. Recruits NEDD4 to IGF1R, leading to IGF1R ubiquitination, increased internalization and degradation by both the proteasomal and lysosomal pathways. A similar role in the mediation of ubiquitination also has been suggested with INSR. Negatively regulates Wnt signaling by interacting with LRP6 intracellular portion and interfering with the binding of AXIN1 to LRP6. Positive regulator of the KDR/VEGFR-2 signaling pathway. May inhibit NEDD4-mediated degradation of KDR/VEGFR-2. This is Growth factor receptor-bound protein 10 (Grb10) from Rattus norvegicus (Rat).